The chain runs to 3462 residues: Extracellular matrix-binding protein EbhA (3462 aa).

Residues 1–19 (MVQQSTTVAEAQGNEQKAN) are compositionally biased toward polar residues. Residues 1–21 (MVQQSTTVAEAQGNEQKANNV) form a disordered region. 19 consecutive FIVAR domains span residues 24-82 (AMDK…INQA), 150-208 (AMGN…VEQA), 276-334 (AMTQ…ITAA), 402-460 (AMTQ…IQQA), 528-586 (AMTN…VEQA), 654-712 (AMTQ…VAQA), 780-838 (AMGT…VTQA), 906-964 (AMSN…ITRA), 1032-1093 (AMDQ…ITNE), 1158-1216 (AMEL…VNGA), 1284-1342 (AMGN…VEQA), 1410-1467 (AMHG…INQA), 1535-1593 (LMDA…VSSA), 1661-1719 (AMEA…VEQL), 1787-1845 (AMQA…VEQL), 1913-1971 (AMET…VDQV), 2039-2093 (SMDQ…VDQA), 2161-2220 (AMDQ…VIKL), and 2415-2471 (AMET…INGA). The helical transmembrane segment at 3267–3289 (VIKNAIGVVGISGLLASFWFFIA) threads the bilayer. The interval 3365 to 3462 (RRKEDEEDVE…KKKKAKKNKK (98 aa)) is disordered. Composition is skewed to basic and acidic residues over residues 3380-3390 (TDEKVLKDNEH) and 3429-3439 (QKDNQSKDKKS). Residues 3444 to 3462 (TSKKVAAKKKKKKAKKNKK) are compositionally biased toward basic residues.

The protein localises to the cell membrane. In Staphylococcus aureus (strain Newman), this protein is Extracellular matrix-binding protein EbhA (ebhA).